A 366-amino-acid polypeptide reads, in one-letter code: MGKIRVGLIFGGQSSEHEVSLQSARNILQAIDGERFEVSLIGVDKQGRWHASQASNFLLNADDPGRIALRESGENLALVPGECSGQLQTAANAHPLAQIDVAFPIVHGTLGEDGSLQGLLRMANIPFVGAGVLGSAVCMDKDVAKRLLRDAGLKVAPFVSLTRSKAAGADLSAIVEQLGLPLFVKPANQGSSVGVSKVKREADLRAALDEAFRYDHKVLVEQAVIGREIECAVLGNERPRASGCGEIVLSDEFYAYDTKYLNEDGARVAVPADIPDEACQRIRGIAIEAFQALECSGMARVDVFLTPDGEVVINELNTLPGFTNISMYPKLWQAAGMSYRELITALIELALEKGRMDEALSRSCQY.

The region spanning 145-348 is the ATP-grasp domain; the sequence is KRLLRDAGLK…YRELITALIE (204 aa). Position 175 to 230 (175 to 230) interacts with ATP; that stretch reads VEQLGLPLFVKPANQGSSVGVSKVKREADLRAALDEAFRYDHKVLVEQAVIGREIE. Residues Asp-302, Glu-315, and Asn-317 each coordinate Mg(2+).

This sequence belongs to the D-alanine--D-alanine ligase family. The cofactor is Mg(2+). Requires Mn(2+) as cofactor.

It localises to the cytoplasm. The catalysed reaction is 2 D-alanine + ATP = D-alanyl-D-alanine + ADP + phosphate + H(+). It functions in the pathway cell wall biogenesis; peptidoglycan biosynthesis. Cell wall formation. The sequence is that of D-alanine--D-alanine ligase A from Chromobacterium violaceum (strain ATCC 12472 / DSM 30191 / JCM 1249 / CCUG 213 / NBRC 12614 / NCIMB 9131 / NCTC 9757 / MK).